Reading from the N-terminus, the 99-residue chain is Ferredoxin-2 (99 aa).

The 2Fe-2S ferredoxin-type domain occupies 4–96 (YQVRLINKKR…DCTIRTHQEA (93 aa)). The [2Fe-2S] cluster site is built by Cys-42, Cys-47, Cys-50, and Cys-80.

It belongs to the 2Fe2S plant-type ferredoxin family. It depends on [2Fe-2S] cluster as a cofactor.

Its function is as follows. Ferredoxins are iron-sulfur proteins that transfer electrons in a wide variety of metabolic reactions. Donates electrons to the nitrogenase. This Leptolyngbya boryana (Plectonema boryanum) protein is Ferredoxin-2 (fdxH).